The primary structure comprises 235 residues: Myc target protein 1 (235 aa).

Residues 95 to 113 (RRRRASAPISQWSSSRRSR) carry the Bipartite nuclear localization signal motif. Phosphoserine is present on residues Ser-135, Ser-138, Ser-141, and Ser-149.

This sequence belongs to the MYCT1 family. Down-regulated in gastric cancer tissues.

It localises to the nucleus. Its function is as follows. May regulate certain MYC target genes, MYC seems to be a direct upstream transcriptional activator. Does not seem to significantly affect growth cell capacity. Overexpression seems to mediate many of the known phenotypic features associated with MYC, including promotion of apoptosis, alteration of morphology, enhancement of anchorage-independent growth, tumorigenic conversion, promotion of genomic instability, and inhibition of hematopoietic differentiation. The polypeptide is Myc target protein 1 (MYCT1) (Homo sapiens (Human)).